The chain runs to 344 residues: Protein-glutamate methylesterase/protein-glutamine glutaminase (344 aa).

The region spanning 7–124 (RVLVVDDSAF…SLTFRQVAPE (118 aa)) is the Response regulatory domain. At Asp-58 the chain carries 4-aspartylphosphate. In terms of domain architecture, CheB-type methylesterase spans 154-344 (PAVSGKIVVI…KIPEKLIELV (191 aa)). Catalysis depends on residues Ser-166, His-193, and Asp-289.

Belongs to the CheB family. Post-translationally, phosphorylated by CheA. Phosphorylation of the N-terminal regulatory domain activates the methylesterase activity.

The protein localises to the cytoplasm. The enzyme catalyses [protein]-L-glutamate 5-O-methyl ester + H2O = L-glutamyl-[protein] + methanol + H(+). The catalysed reaction is L-glutaminyl-[protein] + H2O = L-glutamyl-[protein] + NH4(+). Involved in chemotaxis. Part of a chemotaxis signal transduction system that modulates chemotaxis in response to various stimuli. Catalyzes the demethylation of specific methylglutamate residues introduced into the chemoreceptors (methyl-accepting chemotaxis proteins or MCP) by CheR. Also mediates the irreversible deamidation of specific glutamine residues to glutamic acid. The polypeptide is Protein-glutamate methylesterase/protein-glutamine glutaminase (Thermotoga maritima (strain ATCC 43589 / DSM 3109 / JCM 10099 / NBRC 100826 / MSB8)).